Consider the following 90-residue polypeptide: Cell division protein CrgA (90 aa).

The disordered stretch occupies residues 1–25 (MPKARVTKNETAPVSSNPSANRTPV). The span at 9–22 (NETAPVSSNPSANR) shows a compositional bias: polar residues. The next 2 helical transmembrane spans lie at 38-58 (VIMFAFMIVGLAWLIINYLVG) and 67-87 (LGAWNYGIGFGLMIIGLLMTM).

This sequence belongs to the CrgA family.

It localises to the cell membrane. Its function is as follows. Involved in cell division. This chain is Cell division protein CrgA, found in Corynebacterium glutamicum (strain ATCC 13032 / DSM 20300 / JCM 1318 / BCRC 11384 / CCUG 27702 / LMG 3730 / NBRC 12168 / NCIMB 10025 / NRRL B-2784 / 534).